A 1048-amino-acid chain; its full sequence is PH and SEC7 domain-containing protein 3 (1048 aa).

Basic and acidic residues predominate over residues 36–45; sequence SEGKAPDTSD. Residues 36 to 57 form a disordered region; it reads SEGKAPDTSDHGGSTLLPPNVT. Serine 76 bears the Phosphoserine mark. Disordered stretches follow at residues 104–126, 310–342, 364–383, and 395–434; these read LDSV…LKEQ, GGDK…KVPR, SWKA…SPVR, and QENK…PGYT. The segment covering 311-321 has biased composition (basic and acidic residues); it reads GDKRETQHPID. Positions 397–423 are enriched in basic and acidic residues; that stretch reads NKQHLEKTPKPERDRERISEQEEHVKG. One can recognise an SEC7 domain in the interval 534-734; the sequence is TKGTPEIAFW…KALYNSIKNE (201 aa). Residues 741–758 show a composition bias toward basic and acidic residues; it reads DDEEKKKSPSESTEEKAN. The tract at residues 741–769 is disordered; that stretch reads DDEEKKKSPSESTEEKANGTHPKTISRIG. At serine 770 the chain carries Phosphoserine. A PH domain is found at 785 to 898; sequence AVYKSGFLAR…WINKINCVAA (114 aa). Residues 922 to 952 adopt a coiled-coil conformation; it reads ATTTKLSQEEQLKSHESKLKQITTELAEHRS. The disordered stretch occupies residues 999–1048; sequence DESEAAGLKKSHSSPSLNPDTSPITAKVKRNVSERKDHRPETPSIKQKVT. Phosphoserine occurs at positions 1009, 1011, 1012, 1014, and 1020. Residues 1011–1022 show a composition bias toward polar residues; it reads SSPSLNPDTSPI. The span at 1029 to 1039 shows a compositional bias: basic and acidic residues; that stretch reads NVSERKDHRPE.

In terms of tissue distribution, isoform 2 is expressed in epididymis (at protein level).

The protein resides in the cell membrane. The protein localises to the cell projection. Its subcellular location is the ruffle membrane. It is found in the postsynaptic density. Its function is as follows. Guanine nucleotide exchange factor for ARF6. The sequence is that of PH and SEC7 domain-containing protein 3 (PSD3) from Homo sapiens (Human).